The primary structure comprises 179 residues: Crossover junction endodeoxyribonuclease RuvC (179 aa).

Active-site residues include Asp-7, Glu-67, and Asp-139. Residues Asp-7, Glu-67, and Asp-139 each coordinate Mg(2+).

This sequence belongs to the RuvC family. In terms of assembly, homodimer which binds Holliday junction (HJ) DNA. The HJ becomes 2-fold symmetrical on binding to RuvC with unstacked arms; it has a different conformation from HJ DNA in complex with RuvA. In the full resolvosome a probable DNA-RuvA(4)-RuvB(12)-RuvC(2) complex forms which resolves the HJ. Mg(2+) is required as a cofactor.

The protein localises to the cytoplasm. The enzyme catalyses Endonucleolytic cleavage at a junction such as a reciprocal single-stranded crossover between two homologous DNA duplexes (Holliday junction).. Its function is as follows. The RuvA-RuvB-RuvC complex processes Holliday junction (HJ) DNA during genetic recombination and DNA repair. Endonuclease that resolves HJ intermediates. Cleaves cruciform DNA by making single-stranded nicks across the HJ at symmetrical positions within the homologous arms, yielding a 5'-phosphate and a 3'-hydroxyl group; requires a central core of homology in the junction. The consensus cleavage sequence is 5'-(A/T)TT(C/G)-3'. Cleavage occurs on the 3'-side of the TT dinucleotide at the point of strand exchange. HJ branch migration catalyzed by RuvA-RuvB allows RuvC to scan DNA until it finds its consensus sequence, where it cleaves and resolves the cruciform DNA. The protein is Crossover junction endodeoxyribonuclease RuvC of Sorangium cellulosum (strain So ce56) (Polyangium cellulosum (strain So ce56)).